A 237-amino-acid polypeptide reads, in one-letter code: uncharacterized protein (237 aa).

Positions 119–237 (VTVRRLTPTD…PAGLDGGLPA (119 aa)) constitute an N-acetyltransferase domain.

This is an uncharacterized protein from Streptomyces virginiae (Streptomyces cinnamonensis).